The primary structure comprises 408 residues: Putative ankyrin repeat protein L483 (408 aa).

11 ANK repeats span residues 78–107 (SLNK…DIKA), 108–137 (GDDC…NIRA), 139–167 (NDYA…DIRA), 168–197 (NNDY…NIRT), 198–227 (ENDY…DIRA), 229–257 (NDYA…NIRV), 259–287 (NDYA…NIRA), 288–317 (RCDF…DIRS), 318–347 (QNDY…DIRT), 349–377 (DDYA…NIRA), and 378–407 (KDDY…VLTK).

The polypeptide is Putative ankyrin repeat protein L483 (Acanthamoeba polyphaga (Amoeba)).